Consider the following 382-residue polypeptide: MYIAGVMSGTSLDGIDVALVRIEGSGVESKVELIHFTTVPFCNDIKSEIQQALSIENSNVQLICSLNFKLGLCFANAVKEVCKEANFSLEQLDLIGSHGQTIYHQPKQDGNRIPSTLQIGEPAVIAYETNTTVISNFRTMDMAAGGQGAPLVPYSEVILYRDPSKNRLLQNIGGISNVTVIPNQQSDQNVIAFDTGPGNMIIDEVCQRLFQLPYDQNGEIAKQGRVVNEILTYCMSHQFLKMNPPKSTGREQFGEKFVSELLKRFEKHSKENILTTVTMFTANSIVHHYKKFILPYYEIDEVILGGGGSYNSTLVEMLRNGLKDENCAIFIQEDIGYSSEAKEAIAFAILANETHHCNPSNVPSATGAKQSVVLGNITFPPV.

Residue 9 to 16 participates in ATP binding; the sequence is GTSLDGID.

It belongs to the anhydro-N-acetylmuramic acid kinase family.

It catalyses the reaction 1,6-anhydro-N-acetyl-beta-muramate + ATP + H2O = N-acetyl-D-muramate 6-phosphate + ADP + H(+). The protein operates within amino-sugar metabolism; 1,6-anhydro-N-acetylmuramate degradation. It functions in the pathway cell wall biogenesis; peptidoglycan recycling. Functionally, catalyzes the specific phosphorylation of 1,6-anhydro-N-acetylmuramic acid (anhMurNAc) with the simultaneous cleavage of the 1,6-anhydro ring, generating MurNAc-6-P. Is required for the utilization of anhMurNAc either imported from the medium or derived from its own cell wall murein, and thus plays a role in cell wall recycling. The chain is Anhydro-N-acetylmuramic acid kinase from Bacillus cereus (strain 03BB102).